The sequence spans 310 residues: Porphobilinogen deaminase (310 aa).

S-(dipyrrolylmethanemethyl)cysteine is present on cysteine 242.

It belongs to the HMBS family. Monomer. Requires dipyrromethane as cofactor.

It catalyses the reaction 4 porphobilinogen + H2O = hydroxymethylbilane + 4 NH4(+). It functions in the pathway porphyrin-containing compound metabolism; protoporphyrin-IX biosynthesis; coproporphyrinogen-III from 5-aminolevulinate: step 2/4. In terms of biological role, tetrapolymerization of the monopyrrole PBG into the hydroxymethylbilane pre-uroporphyrinogen in several discrete steps. The chain is Porphobilinogen deaminase from Psychromonas ingrahamii (strain DSM 17664 / CCUG 51855 / 37).